We begin with the raw amino-acid sequence, 111 residues long: MRYVAAYLLAALSGNADPSTADIEKILSSVGIECNPSQLQKVMNELKGKDLEALIAEGQTKLASMPTGGAPAAAAGGAATAPAAEAKEAKKEEKKEESEEEDEDMGFGLFD.

Over residues 63–84 (ASMPTGGAPAAAAGGAATAPAA) the composition is skewed to low complexity. Positions 63–111 (ASMPTGGAPAAAAGGAATAPAAEAKEAKKEEKKEESEEEDEDMGFGLFD) are disordered. The segment covering 85-97 (EAKEAKKEEKKEE) has biased composition (basic and acidic residues). Ser-98 carries the post-translational modification Phosphoserine.

In terms of assembly, part of the ribosomal stalk of the large ribosomal subunit; P1 and P2 exist as dimers which assemble on the P0 scaffold.

Its function is as follows. Plays an important role in the elongation step of protein synthesis. This Artemia salina (Brine shrimp) protein is Large ribosomal subunit protein P2.